We begin with the raw amino-acid sequence, 452 residues long: 23S rRNA (uracil(1939)-C(5))-methyltransferase RlmD (452 aa).

Residues 1-23 (MSRKKSNGGLRFQPAGGNRATQI) are disordered. Residues 22 to 80 (QIPVGKKQRLLIERVAGDGRGIAFIEGRTWFVSGALGGEEVEARVLGARGKVVEARLER) form the TRAM domain. Positions 93, 99, 102, and 181 each coordinate [4Fe-4S] cluster. Gln285, Phe314, Asn319, Glu335, Asp362, and Asp383 together coordinate S-adenosyl-L-methionine. The active-site Nucleophile is the Cys409.

This sequence belongs to the class I-like SAM-binding methyltransferase superfamily. RNA M5U methyltransferase family. RlmD subfamily.

The catalysed reaction is uridine(1939) in 23S rRNA + S-adenosyl-L-methionine = 5-methyluridine(1939) in 23S rRNA + S-adenosyl-L-homocysteine + H(+). Its function is as follows. Catalyzes the formation of 5-methyl-uridine at position 1939 (m5U1939) in 23S rRNA. This is 23S rRNA (uracil(1939)-C(5))-methyltransferase RlmD from Pseudomonas entomophila (strain L48).